We begin with the raw amino-acid sequence, 1859 residues long: Protein TIC 214 (1859 aa).

6 helical membrane passes run 18–38 (IINSVVVVGLYYGFLTTFSIG), 64–84 (FITGQLMMFISIYYAPLHLAL), 87–107 (PHTITVLALPYLLFHFFWNNH), 124–144 (LSIQCVFLNNLIFQLFNHFIL), 172–192 (VGWLIGHILFMKWVGLVLFWI), and 221–241 (IFSILLFITCVYYLGRMPAPI). Residues 247-314 (KETSKTEERG…TEEIRVNGKE (68 aa)) form a disordered region. Residues 256–268 (GESEEERDVEIET) show a composition bias toward acidic residues. A compositionally biased stretch (basic and acidic residues) spans 273 to 284 (KGTKQEQERSTE). Over residues 295 to 306 (EKEDPDKIDETE) the composition is skewed to acidic residues.

Belongs to the TIC214 family. As to quaternary structure, part of the Tic complex.

It localises to the plastid. Its subcellular location is the chloroplast inner membrane. Its function is as follows. Involved in protein precursor import into chloroplasts. May be part of an intermediate translocation complex acting as a protein-conducting channel at the inner envelope. The sequence is that of Protein TIC 214 from Buxus microphylla (Littleleaf boxwood).